Reading from the N-terminus, the 349-residue chain is Aspartate carbamoyltransferase catalytic subunit (349 aa).

Carbamoyl phosphate contacts are provided by Arg-59 and Thr-60. Lys-87 is an L-aspartate binding site. Carbamoyl phosphate-binding residues include Arg-109, His-142, and Gln-145. L-aspartate is bound by residues Arg-182 and Arg-253. The carbamoyl phosphate site is built by Gly-294 and Pro-295.

This sequence belongs to the aspartate/ornithine carbamoyltransferase superfamily. ATCase family. In terms of assembly, heterododecamer (2C3:3R2) of six catalytic PyrB chains organized as two trimers (C3), and six regulatory PyrI chains organized as three dimers (R2).

It catalyses the reaction carbamoyl phosphate + L-aspartate = N-carbamoyl-L-aspartate + phosphate + H(+). It functions in the pathway pyrimidine metabolism; UMP biosynthesis via de novo pathway; (S)-dihydroorotate from bicarbonate: step 2/3. In terms of biological role, catalyzes the condensation of carbamoyl phosphate and aspartate to form carbamoyl aspartate and inorganic phosphate, the committed step in the de novo pyrimidine nucleotide biosynthesis pathway. This Synechococcus sp. (strain CC9605) protein is Aspartate carbamoyltransferase catalytic subunit.